Reading from the N-terminus, the 285-residue chain is NAD kinase (285 aa).

The Proton acceptor role is filled by Asp68. Residues Asp68–Gly69, Asn142–Asp143, Arg153, Lys170, Asp172, and Gln242 each bind NAD(+).

The protein belongs to the NAD kinase family. A divalent metal cation serves as cofactor.

It is found in the cytoplasm. It carries out the reaction NAD(+) + ATP = ADP + NADP(+) + H(+). Involved in the regulation of the intracellular balance of NAD and NADP, and is a key enzyme in the biosynthesis of NADP. Catalyzes specifically the phosphorylation on 2'-hydroxyl of the adenosine moiety of NAD to yield NADP. This is NAD kinase from Koribacter versatilis (strain Ellin345).